The following is an 859-amino-acid chain: Leucine--tRNA ligase (859 aa).

A 'HIGH' region motif is present at residues 43 to 53 (PYPSGRIHMGH). The short motif at 614 to 618 (KMSKS) is the 'KMSKS' region element. Lys617 contributes to the ATP binding site.

Belongs to the class-I aminoacyl-tRNA synthetase family.

The protein localises to the cytoplasm. The enzyme catalyses tRNA(Leu) + L-leucine + ATP = L-leucyl-tRNA(Leu) + AMP + diphosphate. This is Leucine--tRNA ligase from Magnetococcus marinus (strain ATCC BAA-1437 / JCM 17883 / MC-1).